We begin with the raw amino-acid sequence, 719 residues long: Polyphosphate kinase (719 aa).

An ATP-binding site is contributed by Asn54. Residues Arg379 and Arg409 each contribute to the Mg(2+) site. Positions 434–468 (THLKTHSKIALVVKRMNNKLTSFIHLGTGNYNDKT) constitute a PLD phosphodiesterase domain. The active-site Phosphohistidine intermediate is His439. The ATP site is built by Tyr472, Arg568, and His596.

The protein belongs to the polyphosphate kinase 1 (PPK1) family. Mg(2+) serves as cofactor. In terms of processing, an intermediate of this reaction is the autophosphorylated ppk in which a phosphate is covalently linked to a histidine residue through a N-P bond.

The enzyme catalyses [phosphate](n) + ATP = [phosphate](n+1) + ADP. Catalyzes the reversible transfer of the terminal phosphate of ATP to form a long-chain polyphosphate (polyP). This is Polyphosphate kinase from Staphylococcus saprophyticus subsp. saprophyticus (strain ATCC 15305 / DSM 20229 / NCIMB 8711 / NCTC 7292 / S-41).